A 334-amino-acid polypeptide reads, in one-letter code: Glycerol-3-phosphate dehydrogenase [NAD(P)+] (334 aa).

Residues serine 14, tyrosine 15, histidine 35, and lysine 109 each contribute to the NADPH site. Residues lysine 109, glycine 138, and threonine 140 each contribute to the sn-glycerol 3-phosphate site. Alanine 142 provides a ligand contact to NADPH. Positions 194, 247, 257, 258, and 259 each coordinate sn-glycerol 3-phosphate. Lysine 194 functions as the Proton acceptor in the catalytic mechanism. Arginine 258 contributes to the NADPH binding site. 2 residues coordinate NADPH: valine 282 and glutamate 284.

The protein belongs to the NAD-dependent glycerol-3-phosphate dehydrogenase family.

The protein localises to the cytoplasm. It catalyses the reaction sn-glycerol 3-phosphate + NAD(+) = dihydroxyacetone phosphate + NADH + H(+). The enzyme catalyses sn-glycerol 3-phosphate + NADP(+) = dihydroxyacetone phosphate + NADPH + H(+). Its pathway is membrane lipid metabolism; glycerophospholipid metabolism. In terms of biological role, catalyzes the reduction of the glycolytic intermediate dihydroxyacetone phosphate (DHAP) to sn-glycerol 3-phosphate (G3P), the key precursor for phospholipid synthesis. In Aeromonas hydrophila subsp. hydrophila (strain ATCC 7966 / DSM 30187 / BCRC 13018 / CCUG 14551 / JCM 1027 / KCTC 2358 / NCIMB 9240 / NCTC 8049), this protein is Glycerol-3-phosphate dehydrogenase [NAD(P)+].